Reading from the N-terminus, the 250-residue chain is MPIMASTLYRDMLNFFRNQFASILLLALLTALISVVLGHALSPGSEQLMTLSDGTHLGDTAEMSLQQLVQQMSVEQQRVLLKASAAGTLAGLVGNVLLAGGLLTMIRQVSNRQPVSVLRAIGLSAPLLPRLLLLIFLTTLLVQLGLLLIIVPGILLAIAFSLAPVIATSDDLGAIKSMRQSSSLAFANLRLLAPAVLFWLLAKAAVLLLATQFTLVSSLVAVVLLNGLSNLISALLLIYLYRLYMLLRQA.

A run of 6 helical transmembrane segments spans residues 20 to 40 (FASI…LGHA), 86 to 106 (AGTL…LTMI), 121 to 141 (IGLS…TTLL), 146 to 166 (LLLI…APVI), 191 to 211 (LLAP…LLAT), and 219 to 239 (LVAV…LLIY).

Belongs to the UPF0259 family.

The protein resides in the cell inner membrane. This chain is UPF0259 membrane protein SG1383, found in Sodalis glossinidius (strain morsitans).